The primary structure comprises 90 residues: MNNSVITVIGKDRVGIVYDVSKILAENQINILNISQQLMDDFFTMIILVDTSKCSKSRQEVLDLFAEESKKLALDIRMQNEEIFQAMHRI.

One can recognise an ACT domain in the interval 5-83; sequence VITVIGKDRV…LDIRMQNEEI (79 aa).

The protein belongs to the UPF0237 family.

The sequence is that of UPF0237 protein NMB1653 from Neisseria meningitidis serogroup B (strain ATCC BAA-335 / MC58).